A 513-amino-acid polypeptide reads, in one-letter code: 2-isopropylmalate synthase (513 aa).

Residues 5-268 (LIIFDTTLRD…DVGIDTTQIV (264 aa)) enclose the Pyruvate carboxyltransferase domain. Residues Asp14, His202, His204, and Asn239 each coordinate Mn(2+). The tract at residues 394–513 (RFISLSQRSE…KAVQKINPQI (120 aa)) is regulatory domain.

It belongs to the alpha-IPM synthase/homocitrate synthase family. LeuA type 1 subfamily. As to quaternary structure, homodimer. Requires Mn(2+) as cofactor.

It localises to the cytoplasm. The catalysed reaction is 3-methyl-2-oxobutanoate + acetyl-CoA + H2O = (2S)-2-isopropylmalate + CoA + H(+). The protein operates within amino-acid biosynthesis; L-leucine biosynthesis; L-leucine from 3-methyl-2-oxobutanoate: step 1/4. Catalyzes the condensation of the acetyl group of acetyl-CoA with 3-methyl-2-oxobutanoate (2-ketoisovalerate) to form 3-carboxy-3-hydroxy-4-methylpentanoate (2-isopropylmalate). The protein is 2-isopropylmalate synthase of Cupriavidus metallidurans (strain ATCC 43123 / DSM 2839 / NBRC 102507 / CH34) (Ralstonia metallidurans).